The following is a 322-amino-acid chain: MASHEIQKVWADGCFDMFHYGHANALRQSKALGDYLIAGVHSSLSINQEKGLPVMEDEERYEVVEGCRYVDEVVRDAPFVTQTSMIKEYGVSIVAHGNDIVLDSSGQDSYCQVRRMGIFREVERTFGISTTEIVGRMMLKNRGSWLDGENGESSKDSGYHDRLLSLFMSSMGREKRGKVVFMDGNFDLFHAGHVASLRIARGMGDYLIVGIHDDETTKEYTRSYPVLSTKERMLTLMACRYVDEIVVSPYLVGSEFIKRHGIDVVAPSFDSKDLSRYDGIKDVVEHSYAENRFNYLSAEHIVNRIISNYQDYANRQKKRTGK.

The protein belongs to the cytidylyltransferase family.

The enzyme catalyses phosphoethanolamine + CTP + H(+) = CDP-ethanolamine + diphosphate. The protein operates within phospholipid metabolism; phosphatidylethanolamine biosynthesis; phosphatidylethanolamine from ethanolamine: step 2/3. The polypeptide is Probable ethanolamine-phosphate cytidylyltransferase (MUQ1) (Encephalitozoon cuniculi (strain GB-M1) (Microsporidian parasite)).